We begin with the raw amino-acid sequence, 682 residues long: Activating transcription factor 7-interacting protein 2 (682 aa).

The tract at residues 120–148 (SRTTESPSRVFTEEAKDSLNTSENDSEHQ) is disordered. Over residues 137–148 (SLNTSENDSEHQ) the composition is skewed to polar residues. Residues 328-378 (EIYSINYELFDKKLKELNQRIGKTECRNKHEGIADKLLAKIAKLQRRIKTV) are a coiled coil. Ser-416 carries the phosphoserine modification. 2 stretches are compositionally biased toward polar residues: residues 418 to 451 (IEKS…VSES) and 462 to 490 (ESPN…NSPN). 2 disordered regions span residues 418 to 491 (IEKS…SPNA) and 513 to 538 (NCNT…ETTP). Ser-488 and Ser-521 each carry phosphoserine. A compositionally biased stretch (polar residues) spans 528–538 (KAASNSKETTP). Positions 575 to 680 (PPQKPELKVK…IKSIPGFSEN (106 aa)) constitute a Fibronectin type-III domain.

This sequence belongs to the MCAF family. As to quaternary structure, interacts with MBD1, SETDB1 and SP1. Probably forms a complex with SETDB1 and MBD1.

It localises to the nucleus. Recruiter that couples transcriptional factors to general transcription apparatus and thereby modulates transcription regulation and chromatin formation. Can both act as an activator or a repressor depending on the context. Mediates MBD1-dependent transcriptional repression, probably by recruiting complexes containing SETDB1. The complex formed with MBD1 and SETDB1 represses transcription and probably couples DNA methylation and histone H3 'Lys-9' trimethylation (H3K9me3) activity. This is Activating transcription factor 7-interacting protein 2 (ATF7IP2) from Homo sapiens (Human).